Consider the following 709-residue polypeptide: Ribosomal RNA large subunit methyltransferase K/L (709 aa).

The region spanning 43-154 (LAYRITLWTR…NGVITIAMNF (112 aa)) is the THUMP domain.

Belongs to the methyltransferase superfamily. RlmKL family.

The protein localises to the cytoplasm. The catalysed reaction is guanosine(2445) in 23S rRNA + S-adenosyl-L-methionine = N(2)-methylguanosine(2445) in 23S rRNA + S-adenosyl-L-homocysteine + H(+). It catalyses the reaction guanosine(2069) in 23S rRNA + S-adenosyl-L-methionine = N(2)-methylguanosine(2069) in 23S rRNA + S-adenosyl-L-homocysteine + H(+). Specifically methylates the guanine in position 2445 (m2G2445) and the guanine in position 2069 (m7G2069) of 23S rRNA. In Shewanella sp. (strain W3-18-1), this protein is Ribosomal RNA large subunit methyltransferase K/L.